We begin with the raw amino-acid sequence, 435 residues long: Trigger factor (435 aa).

The 86-residue stretch at 163-248 (DDITLIDFTG…INEIKRKELA (86 aa)) folds into the PPIase FKBP-type domain.

Belongs to the FKBP-type PPIase family. Tig subfamily.

The protein localises to the cytoplasm. The catalysed reaction is [protein]-peptidylproline (omega=180) = [protein]-peptidylproline (omega=0). In terms of biological role, involved in protein export. Acts as a chaperone by maintaining the newly synthesized protein in an open conformation. Functions as a peptidyl-prolyl cis-trans isomerase. The polypeptide is Trigger factor (Desulforamulus reducens (strain ATCC BAA-1160 / DSM 100696 / MI-1) (Desulfotomaculum reducens)).